Here is a 331-residue protein sequence, read N- to C-terminus: MVEIYYDDDANLDNLADRKVAVIGFGSQGHAHALNLRDSGVDVRVGLPETSTSRAKAEEQGLRVVTPAEASAEADIIMILTPDTTHRKIYAESIAPHLTPGKALAFGHGFNIRYGLIEPPAGVDVFMVAPKGPGHLVRRVFVEGKGVPVLVAVEADATGKALDIALAYAKGIGGTRAGALRTTFTEETETDLFGEQAVLCGGASALVQAGFETLVEAGYTPEVAYFECLHELKLIVDLMYEGGISQMRYSISDTAEYGDVTRGPRVITPAVKAEMRKILDEIQDGTFAREWVAEDDAGRATFTKLVEEGKQHPIEQVGGKLRPMMSWIAKD.

Residues 2–182 (VEIYYDDDAN…GGTRAGALRT (181 aa)) enclose the KARI N-terminal Rossmann domain. NADP(+) contacts are provided by residues 25-28 (FGSQ), serine 51, and serine 53. Residue histidine 108 is part of the active site. Residue glycine 134 coordinates NADP(+). Residues 183-328 (TFTEETETDL…GKLRPMMSWI (146 aa)) enclose the KARI C-terminal knotted domain. Positions 191, 195, 227, and 231 each coordinate Mg(2+). Position 252 (serine 252) interacts with substrate.

The protein belongs to the ketol-acid reductoisomerase family. Mg(2+) is required as a cofactor.

The catalysed reaction is (2R)-2,3-dihydroxy-3-methylbutanoate + NADP(+) = (2S)-2-acetolactate + NADPH + H(+). It carries out the reaction (2R,3R)-2,3-dihydroxy-3-methylpentanoate + NADP(+) = (S)-2-ethyl-2-hydroxy-3-oxobutanoate + NADPH + H(+). It participates in amino-acid biosynthesis; L-isoleucine biosynthesis; L-isoleucine from 2-oxobutanoate: step 2/4. The protein operates within amino-acid biosynthesis; L-valine biosynthesis; L-valine from pyruvate: step 2/4. Involved in the biosynthesis of branched-chain amino acids (BCAA). Catalyzes an alkyl-migration followed by a ketol-acid reduction of (S)-2-acetolactate (S2AL) to yield (R)-2,3-dihydroxy-isovalerate. In the isomerase reaction, S2AL is rearranged via a Mg-dependent methyl migration to produce 3-hydroxy-3-methyl-2-ketobutyrate (HMKB). In the reductase reaction, this 2-ketoacid undergoes a metal-dependent reduction by NADPH to yield (R)-2,3-dihydroxy-isovalerate. This chain is Ketol-acid reductoisomerase (NADP(+)), found in Parafrankia sp. (strain EAN1pec).